We begin with the raw amino-acid sequence, 842 residues long: Alanine--tRNA ligase (842 aa).

Positions 549, 553, 650, and 654 each coordinate Zn(2+).

This sequence belongs to the class-II aminoacyl-tRNA synthetase family. The cofactor is Zn(2+).

Its subcellular location is the cytoplasm. It catalyses the reaction tRNA(Ala) + L-alanine + ATP = L-alanyl-tRNA(Ala) + AMP + diphosphate. Its function is as follows. Catalyzes the attachment of alanine to tRNA(Ala) in a two-step reaction: alanine is first activated by ATP to form Ala-AMP and then transferred to the acceptor end of tRNA(Ala). Also edits incorrectly charged Ser-tRNA(Ala) and Gly-tRNA(Ala) via its editing domain. This chain is Alanine--tRNA ligase, found in Campylobacter jejuni (strain RM1221).